The primary structure comprises 353 residues: Photosystem II protein D1 (353 aa).

The residue at position 2 (threonine 2) is an N-acetylthreonine. Threonine 2 carries the post-translational modification Phosphothreonine. 3 helical membrane passes run tyrosine 29–serine 46, histidine 118–leucine 133, and tryptophan 142–alanine 156. Histidine 118 contacts chlorophyll a. Residue tyrosine 126 participates in pheophytin a binding. Aspartate 170 and glutamate 189 together coordinate [CaMn4O5] cluster. Residues phenylalanine 197–leucine 218 traverse the membrane as a helical segment. Residue histidine 198 participates in chlorophyll a binding. Residues histidine 215 and serine 264–phenylalanine 265 each bind a quinone. Histidine 215 lines the Fe cation pocket. Histidine 272 is a Fe cation binding site. Residues phenylalanine 274–leucine 288 form a helical membrane-spanning segment. [CaMn4O5] cluster is bound by residues histidine 332, glutamate 333, aspartate 342, and alanine 344. The propeptide occupies serine 345 to alanine 353.

It belongs to the reaction center PufL/M/PsbA/D family. PSII is composed of 1 copy each of membrane proteins PsbA, PsbB, PsbC, PsbD, PsbE, PsbF, PsbH, PsbI, PsbJ, PsbK, PsbL, PsbM, PsbT, PsbX, PsbY, PsbZ, Psb30/Ycf12, at least 3 peripheral proteins of the oxygen-evolving complex and a large number of cofactors. It forms dimeric complexes. It depends on The D1/D2 heterodimer binds P680, chlorophylls that are the primary electron donor of PSII, and subsequent electron acceptors. It shares a non-heme iron and each subunit binds pheophytin, quinone, additional chlorophylls, carotenoids and lipids. D1 provides most of the ligands for the Mn4-Ca-O5 cluster of the oxygen-evolving complex (OEC). There is also a Cl(-1) ion associated with D1 and D2, which is required for oxygen evolution. The PSII complex binds additional chlorophylls, carotenoids and specific lipids. as a cofactor. In terms of processing, tyr-161 forms a radical intermediate that is referred to as redox-active TyrZ, YZ or Y-Z. Post-translationally, C-terminally processed by CTPA; processing is essential to allow assembly of the oxygen-evolving complex and thus photosynthetic growth.

Its subcellular location is the plastid. It localises to the chloroplast thylakoid membrane. The enzyme catalyses 2 a plastoquinone + 4 hnu + 2 H2O = 2 a plastoquinol + O2. In terms of biological role, photosystem II (PSII) is a light-driven water:plastoquinone oxidoreductase that uses light energy to abstract electrons from H(2)O, generating O(2) and a proton gradient subsequently used for ATP formation. It consists of a core antenna complex that captures photons, and an electron transfer chain that converts photonic excitation into a charge separation. The D1/D2 (PsbA/PsbD) reaction center heterodimer binds P680, the primary electron donor of PSII as well as several subsequent electron acceptors. The sequence is that of Photosystem II protein D1 from Chara vulgaris (Common stonewort).